The following is an 846-amino-acid chain: uncharacterized protein (846 aa).

6 WD repeats span residues 88-129, 132-172, 175-215, 219-258, 262-309, and 313-348; these read TKHI…LLYD, EHSR…STIT, GNSE…LPFL, AHNGVVLCVNYSPNGVFLASCGRDKTIRIWDSTSNKKKSL, NNVS…IPYR, and CHDSIVSTMHWASTELLWSCSKDGIFSQTRVENAFN. A disordered region spans residues 541–560; sequence PREASTPSESSNSSIESEDN. The segment covering 544–555 has biased composition (low complexity); that stretch reads ASTPSESSNSSI. A WD 7 repeat occupies 624–663; that stretch reads FHRSSVTSASIKSREAVLSAGNSSRRASIFLDQLSLHGDT.

This is an uncharacterized protein from Schizosaccharomyces pombe (strain 972 / ATCC 24843) (Fission yeast).